The following is a 568-amino-acid chain: Zinc finger protein 768 (568 aa).

A compositionally biased stretch (basic and acidic residues) spans 1–16; that stretch reads MEREASSWGLESRDVH. Disordered regions lie at residues 1 to 223, 228 to 247, and 264 to 287; these read MERE…SLGV, SFTQGFGEQPTGALPPFDMP, and LNLTGTLRGPGRRGGRARGGQGPR. A phosphoserine mark is found at serine 17, serine 23, and serine 27. Threonine 35 is subject to Phosphothreonine. 13 positions are modified to phosphoserine: serine 36, serine 65, serine 72, serine 79, serine 86, serine 93, serine 100, serine 107, serine 114, serine 121, serine 128, serine 135, and serine 149. The segment covering 62-80 has biased composition (low complexity); the sequence is EPQSPEFEPQSPEFESQSP. The segment covering 110–122 has biased composition (polar residues); the sequence is SDPQSPEFESQSP. The residue at position 152 (tyrosine 152) is a Phosphotyrosine. Phosphoserine is present on serine 154. The segment covering 159–186 has biased composition (polar residues); sequence FESQSPGYESQSPGYEPQNSGDGVQNSE. Threonine 189 is modified (phosphothreonine). At serine 191 the chain carries Phosphoserine. Residues 289 to 311 form a C2H2-type 1 zinc finger; sequence NICGICGKSFGRGSTLIQHQRIH. Threonine 312 carries the post-translational modification Phosphothreonine. At tyrosine 317 the chain carries Phosphotyrosine. 4 consecutive C2H2-type zinc fingers follow at residues 317–339, 345–367, 373–395, and 401–423; these read YKCEVCSKAFSQSSDLIKHQRTH, YKCPRCGKAFADSSYLLRHQRTH, YKCPHCGKAFGDSSYLLRHQRTH, and YSCPECGKCYSQNSSLRSHQRVH. Residues serine 323 and serine 327 each carry the phosphoserine modification. Phosphothreonine is present on threonine 424. 5 consecutive C2H2-type zinc fingers follow at residues 429 to 451, 457 to 479, 485 to 507, 513 to 535, and 541 to 563; these read FSCGICGKSFSQRSALIPHARSH, FKCPECGKRFGQSSVLAIHARTH, YSCPDCGKTFNRSSTLIQHQRSH, YRCAVCGKGFCRSSTLLQHHRVH, and YKCDDCGKAFSQSSDLIRHQRTH. At serine 470 the chain carries Phosphoserine.

It belongs to the krueppel C2H2-type zinc-finger protein family. In terms of assembly, interacts (via zinc-finger domains) with TP53 (via N-terminus); interaction might be facilitated by TP53 oligomerization state. Interacts with ELP3. May be phosphorylated at residue 'Ser-5' of the tandem heptapeptide repeats in the N-terminus. Phosphorylation might be increased upon RAS pathway activation and negatively regulate protein stability.

The protein resides in the nucleus. Its subcellular location is the chromosome. Its function is as follows. Binds to mammalian-wide interspersed repeat (MIRs) sequences in euchromatin and promoter regions of genes at the consensus sequence 5'-GCTGTGTG-[N20]-CCTCTCTG-3', consisting of two anchor regions connected by a linker region; the linker region probably does not contribute to the binding specificity. Required for cell homeostasis. May be involved in transcriptional regulation. The polypeptide is Zinc finger protein 768 (Znf768) (Mus musculus (Mouse)).